Consider the following 367-residue polypeptide: Molybdopterin synthase catalytic subunit (367 aa).

Residues 101–102 (HR), lysine 117, and 124–126 (KKE) contribute to the substrate site. The interval 326 to 345 (HFTKREPSSMEAAPPKKIRK) is disordered.

The protein belongs to the MoaE family. MOCS2B subfamily. Heterotetramer; composed of 2 small (Mocs2A) and 2 large (Mocs2B) subunits.

The protein resides in the cytoplasm. The catalysed reaction is 2 [molybdopterin-synthase sulfur-carrier protein]-C-terminal-Gly-aminoethanethioate + cyclic pyranopterin phosphate + H2O = molybdopterin + 2 [molybdopterin-synthase sulfur-carrier protein]-C-terminal Gly-Gly + 2 H(+). It participates in cofactor biosynthesis; molybdopterin biosynthesis. Catalytic subunit of the molybdopterin synthase complex, a complex that catalyzes the conversion of precursor Z into molybdopterin. Acts by mediating the incorporation of 2 sulfur atoms from thiocarboxylated Mocs2A into precursor Z to generate a dithiolene group. The polypeptide is Molybdopterin synthase catalytic subunit (Drosophila sechellia (Fruit fly)).